Reading from the N-terminus, the 314-residue chain is MIEIEKPVIETIEISEDAKYGKFVVEPLERGYGTTLGNSLRRILLSSLPGAAVTSVQIDGVLHEFSTIEGVVEDVTTIVLNLKQLALKIYSDEDKTLEIDTQGEGVVTAGDLTHDSDVDVLNPDLHIATLTTGAHLRMRITAKRGRGYVPAEGNKSDELAIGVIPIDSIYTPVSRVNYQVENTRVGQVTNYDKLTLDVWTDGSIRPEEAVSLGAKILTEHLNIFVGLTDQAQNAEIMVEKEEDQKEKVLEMTIEELDLSVRSYNCLKRAGINTVQELTQKTEEDMMKVRNLGRKSLEEVQEKLGELGLGLRKEE.

Positions 1-228 are alpha N-terminal domain (alpha-NTD); it reads MIEIEKPVIE…EHLNIFVGLT (228 aa). The alpha C-terminal domain (alpha-CTD) stretch occupies residues 245-314; sequence KEKVLEMTIE…ELGLGLRKEE (70 aa).

Belongs to the RNA polymerase alpha chain family. In terms of assembly, homodimer. The RNAP catalytic core consists of 2 alpha, 1 beta, 1 beta' and 1 omega subunit. When a sigma factor is associated with the core the holoenzyme is formed, which can initiate transcription.

The enzyme catalyses RNA(n) + a ribonucleoside 5'-triphosphate = RNA(n+1) + diphosphate. DNA-dependent RNA polymerase catalyzes the transcription of DNA into RNA using the four ribonucleoside triphosphates as substrates. This is DNA-directed RNA polymerase subunit alpha from Halalkalibacterium halodurans (strain ATCC BAA-125 / DSM 18197 / FERM 7344 / JCM 9153 / C-125) (Bacillus halodurans).